We begin with the raw amino-acid sequence, 394 residues long: GDNF family receptor alpha-like (394 aa).

A signal peptide spans 1-18; it reads MIVFIFLAMGLSLENEYT. The Extracellular portion of the chain corresponds to 19–351; sequence SQTNNCTYLR…TGFHSPFNGE (333 aa). 6 N-linked (GlcNAc...) asparagine glycosylation sites follow: Asn-23, Asn-50, Asn-62, Asn-67, Asn-103, and Asn-116. 11 cysteine pairs are disulfide-bonded: Cys-131–Cys-189, Cys-138–Cys-144, Cys-155–Cys-167, Cys-162–Cys-210, Cys-191–Cys-198, Cys-220–Cys-291, Cys-227–Cys-233, Cys-244–Cys-275, Cys-252–Cys-258, Cys-269–Cys-316, and Cys-293–Cys-304. The tract at residues 149 to 228 is required for interaction with GDF15; the sequence is ASYLKACSAN…TCLSVIRSCQ (80 aa). A helical membrane pass occupies residues 352–371; that stretch reads VIYAAMCMTVTCGILLLVMV. Residues 372 to 394 are Cytoplasmic-facing; that stretch reads KLRTSRISSKARDPSSIQIPGEL.

Belongs to the GDNFR family. As to quaternary structure, interacts (via the extracellular domain) with GDF15 and RET; receptor of GDF15, mediates cellular signaling through interaction with RET after GDF15-binding. Interaction with RET requires previous GDF15-binding. Post-translationally, cleaved and inactivated by MMP14, inhibiting the GDF15-GFRAL aversive response. As to expression, expressed in the brainstem, restricted to cells in the area postrema and the immediately adjacent region of the nucleus tractus solitarius (at protein level). Detected at low levels in testis and adipose tissue.

Its subcellular location is the cell membrane. With respect to regulation, specifically inhibited by 3P10 monoclonal antibody. Strongly activated by LY3463251, a long-acting and stable agonist composed of GDF15 conjugated monomeric human IgG4 Fc. Brainstem-restricted receptor for GDF15 hormone, which triggers an aversive response, characterized by nausea, vomiting, and/or loss of appetite in response to various stresses. The aversive response is both required to reduce continuing exposure to those stresses at the time of exposure and to promote avoidance behavior in the future. The GDF15-GFRAL aversive response is triggered by stresses, such as anticancer drugs (camptothecin or cisplatin), cancers or drugs such as metformin. Upon interaction with its ligand, GDF15, mediates the GDF15-induced autophosphorylation and activation of the RET tyrosine kinase receptor, leading to activation of MAPK- and AKT- signaling pathways. Ligand-binding activates GFRAL-expressing neurons localized in the area postrema and nucleus tractus solitarius of the brainstem. The GDF15-GFRAL signal induces expression of genes involved in metabolism, such as lipid metabolism in adipose tissues. The polypeptide is GDNF family receptor alpha-like (Homo sapiens (Human)).